An 89-amino-acid polypeptide reads, in one-letter code: Small ribosomal subunit protein uS15 (89 aa).

This sequence belongs to the universal ribosomal protein uS15 family. In terms of assembly, part of the 30S ribosomal subunit. Forms a bridge to the 50S subunit in the 70S ribosome, contacting the 23S rRNA.

In terms of biological role, one of the primary rRNA binding proteins, it binds directly to 16S rRNA where it helps nucleate assembly of the platform of the 30S subunit by binding and bridging several RNA helices of the 16S rRNA. Its function is as follows. Forms an intersubunit bridge (bridge B4) with the 23S rRNA of the 50S subunit in the ribosome. This chain is Small ribosomal subunit protein uS15, found in Roseiflexus castenholzii (strain DSM 13941 / HLO8).